The following is a 255-amino-acid chain: Probable pyridoxal 5'-phosphate synthase subunit PDX2 (255 aa).

46–48 (GES) lines the L-glutamine pocket. The active-site Nucleophile is the Cys78. L-glutamine contacts are provided by residues Arg108 and 142–143 (IR). Active-site charge relay system residues include His202 and Glu204. The segment at 225-255 (GASSSSSKTIVSVGETSAGPEPAKPDLPIFQ) is disordered.

Belongs to the glutaminase PdxT/SNO family. In terms of assembly, interacts with PDX1.1 or PDX1.3, but not with PDX1.2. Binds to RPA2A. Strongly expressed in roots, stems, leaves and flowers.

It is found in the cytoplasm. The enzyme catalyses aldehydo-D-ribose 5-phosphate + D-glyceraldehyde 3-phosphate + L-glutamine = pyridoxal 5'-phosphate + L-glutamate + phosphate + 3 H2O + H(+). It carries out the reaction L-glutamine + H2O = L-glutamate + NH4(+). The protein operates within cofactor biosynthesis; pyridoxal 5'-phosphate biosynthesis. Its function is as follows. Catalyzes the hydrolysis of glutamine to glutamate and ammonia as part of the biosynthesis of pyridoxal 5'-phosphate. The resulting ammonia molecule is channeled to the active site of PDX1. Involved in the indirect resistance to singlet oxygen-generating photosensitizers. In Arabidopsis thaliana (Mouse-ear cress), this protein is Probable pyridoxal 5'-phosphate synthase subunit PDX2 (PDX2).